A 344-amino-acid polypeptide reads, in one-letter code: C-C chemokine receptor-like 2 (344 aa).

Residues 1 to 43 (MANYTLAPEDEYDVLIEGELESDEAEQCDRYDTWALSAQLVPS) lie on the Extracellular side of the membrane. Asn-3 carries an N-linked (GlcNAc...) asparagine glycan. The chain crosses the membrane as a helical span at residues 44–64 (LCSAVFVVGVLDNLLVVLILV). The Cytoplasmic segment spans residues 65–74 (KYKGLKRVEN). A helical membrane pass occupies residues 75–95 (IYLLNLAVSNLCFLLTLPFWA). Over 96 to 104 (HAGGDPMCK) the chain is Extracellular. The cysteines at positions 103 and 181 are disulfide-linked. A helical membrane pass occupies residues 105-125 (ILIGLYFVGLYSETFFNCLLT). Topologically, residues 126–148 (LQRYLVFLHKGNFFSVRRRVPCG) are cytoplasmic. A helical membrane pass occupies residues 149–169 (IVTSAVAWVTAILATVPEFAV). At 170–198 (YKPQMEDPKYKCAFSRTPFLPADETFWKH) the chain is on the extracellular side. Residues 199–219 (FLTLKMNVSVLVFPLFIFTFL) traverse the membrane as a helical segment. At 220 to 238 (YVQMRKTLRFGEQRYSLFK) the chain is on the cytoplasmic side. A helical membrane pass occupies residues 239-259 (LVFAIMVVFLLMWAPYNIALF). The Extracellular portion of the chain corresponds to 260 to 281 (LSTFKEHFSLSDCKSNYNLDKS). Residues 282–302 (VLITKLIATTHCCVNPLLYVF) form a helical membrane-spanning segment. At 303–344 (LDGTFRKYLCRFFHRRSNTPRQPRRRFAQGTSREEPDRSTEV) the chain is on the cytoplasmic side. Residues 323–344 (RQPRRRFAQGTSREEPDRSTEV) are disordered. The segment covering 334–344 (SREEPDRSTEV) has biased composition (basic and acidic residues).

Belongs to the G-protein coupled receptor 1 family.

Its subcellular location is the cell membrane. Functionally, receptor for CCL19 and chemerin/RARRES2. Does not appear to be a signaling receptor, but may have a role in modulating chemokine-triggered immune responses by capturing and internalizing CCL19 or by presenting RARRES2 ligand to CMKLR1, a functional signaling receptor. Plays a critical role for the development of Th2 responses. The sequence is that of C-C chemokine receptor-like 2 (CCRL2) from Macaca mulatta (Rhesus macaque).